A 134-amino-acid polypeptide reads, in one-letter code: Large-conductance mechanosensitive channel (134 aa).

2 helical membrane passes run 16–36 and 81–101; these read VIDLAVGVVIGAAFGKIVTAL and GDFINTLIQFVIVAFAIFIVV.

Belongs to the MscL family. Homopentamer.

The protein resides in the cell inner membrane. In terms of biological role, channel that opens in response to stretch forces in the membrane lipid bilayer. May participate in the regulation of osmotic pressure changes within the cell. The sequence is that of Large-conductance mechanosensitive channel from Stenotrophomonas maltophilia (strain K279a).